Here is a 191-residue protein sequence, read N- to C-terminus: UPF0149 protein VV2847 (191 aa).

The protein belongs to the UPF0149 family.

The polypeptide is UPF0149 protein VV2847 (Vibrio vulnificus (strain YJ016)).